The chain runs to 599 residues: Elongation factor 4 (599 aa).

The tr-type G domain maps to 4–186; that stretch reads ENIRNFSIIA…EIVKKIPPPE (183 aa). GTP contacts are provided by residues 16–21 and 133–136; these read DHGKST and NKID.

Belongs to the TRAFAC class translation factor GTPase superfamily. Classic translation factor GTPase family. LepA subfamily.

It localises to the cell inner membrane. The catalysed reaction is GTP + H2O = GDP + phosphate + H(+). In terms of biological role, required for accurate and efficient protein synthesis under certain stress conditions. May act as a fidelity factor of the translation reaction, by catalyzing a one-codon backward translocation of tRNAs on improperly translocated ribosomes. Back-translocation proceeds from a post-translocation (POST) complex to a pre-translocation (PRE) complex, thus giving elongation factor G a second chance to translocate the tRNAs correctly. Binds to ribosomes in a GTP-dependent manner. This chain is Elongation factor 4, found in Geobacter metallireducens (strain ATCC 53774 / DSM 7210 / GS-15).